We begin with the raw amino-acid sequence, 246 residues long: NH(3)-dependent NAD(+) synthetase (246 aa).

29-36 (GLSGGIDS) provides a ligand contact to ATP. Position 35 (Asp-35) interacts with Mg(2+). Arg-110 contacts deamido-NAD(+). Thr-130 contributes to the ATP binding site. A Mg(2+)-binding site is contributed by Glu-135. Residues Lys-159 and Ser-181 each coordinate ATP.

It belongs to the NAD synthetase family. In terms of assembly, homodimer.

The catalysed reaction is deamido-NAD(+) + NH4(+) + ATP = AMP + diphosphate + NAD(+) + H(+). It functions in the pathway cofactor biosynthesis; NAD(+) biosynthesis; NAD(+) from deamido-NAD(+) (ammonia route): step 1/1. Functionally, catalyzes the ATP-dependent amidation of deamido-NAD to form NAD. Uses ammonia as a nitrogen source. This is NH(3)-dependent NAD(+) synthetase from Campylobacter jejuni subsp. jejuni serotype O:2 (strain ATCC 700819 / NCTC 11168).